The sequence spans 434 residues: Glutamyl-tRNA reductase (434 aa).

Substrate is bound by residues 49–52, serine 109, 114–116, and glutamine 120; these read TCNR and EPQ. The active-site Nucleophile is cysteine 50. Residue 189–194 participates in NADP(+) binding; sequence GAGEMC.

Belongs to the glutamyl-tRNA reductase family. As to quaternary structure, homodimer.

The enzyme catalyses (S)-4-amino-5-oxopentanoate + tRNA(Glu) + NADP(+) = L-glutamyl-tRNA(Glu) + NADPH + H(+). It functions in the pathway porphyrin-containing compound metabolism; protoporphyrin-IX biosynthesis; 5-aminolevulinate from L-glutamyl-tRNA(Glu): step 1/2. Functionally, catalyzes the NADPH-dependent reduction of glutamyl-tRNA(Glu) to glutamate 1-semialdehyde (GSA). This is Glutamyl-tRNA reductase from Trichlorobacter lovleyi (strain ATCC BAA-1151 / DSM 17278 / SZ) (Geobacter lovleyi).